The primary structure comprises 952 residues: Germ layers disorganized gldi-3 (952 aa).

Residues 39-100 (KSFGRATTND…NGTYINDRRL (62 aa)) enclose the FHA domain. Disordered stretches follow at residues 174–220 (IGPR…MPST), 483–639 (GTPK…ESTV), and 652–866 (AAQS…KERC). 2 stretches are compositionally biased toward polar residues: residues 179–195 (PSTTNKVLQQEADSTNG) and 202–220 (NRASSASSATPEDTQMPST). Over residues 523–537 (EESEILDVVGTDEPD) the composition is skewed to acidic residues. Residues 553–568 (PEDHGRQTQNKIDKNV) are compositionally biased toward basic and acidic residues. Composition is skewed to polar residues over residues 569–584 (RMSSTPRIDAQSTPSA) and 600–620 (VTSSKSAQDVSTPSTTPNPVS). Positions 662-679 (SVSNTTSSTSASLTTSSV) are enriched in low complexity. Residues 685 to 706 (TSSKENTDQKRAVDDSSDESAR) show a composition bias toward basic and acidic residues. Over residues 715–724 (SATPSSTPAE) the composition is skewed to low complexity. A compositionally biased stretch (basic and acidic residues) spans 725–742 (SSKRKQKDTSSRKMKQLD). Basic residues predominate over residues 761–772 (TKRRDKARRSTR). Acidic residues predominate over residues 789 to 800 (VEDEDETDDVQE). Basic and acidic residues-rich tracts occupy residues 823–832 (IKERKTKDKD) and 856–866 (PPKTEPSKERC).

The protein localises to the nucleus. Its function is as follows. Potential transcription factor that may play a role in the regulation of genes involved in cell cycle G1/S transition. May bind to regulatory elements of genes. The sequence is that of Germ layers disorganized gldi-3 from Caenorhabditis elegans.